Reading from the N-terminus, the 572-residue chain is Cuticlin-6 (572 aa).

A signal peptide spans 1–24 (MRPIPYDISLSITSFLSLILICSA). At 25-541 (NPIDNGLVDS…PLPYPLINTN (517 aa)) the chain is on the extracellular side. Residues 47 to 216 (EVILLLDASG…QLDRALADSL (170 aa)) enclose the VWFA domain. N78 carries N-linked (GlcNAc...) asparagine glycosylation. Positions 233–479 (ICGPDRIGVK…GGCEGITPPQ (247 aa)) constitute a ZP domain. The helical transmembrane segment at 542 to 562 (LWIMGIITLTNIFVFILTVWF) threads the bilayer. Over 563 to 572 (TFRKRRCKPA) the chain is Cytoplasmic.

Its subcellular location is the cell membrane. Functionally, plays a role in alae formation in dauer larvae probably by regulating cuticle assembly. The chain is Cuticlin-6 from Caenorhabditis elegans.